Here is a 102-residue protein sequence, read N- to C-terminus: Vesicle-associated membrane protein 5 (102 aa).

At 1–72 the chain is on the cytoplasmic side; that stretch reads MAGKELERCQ…RWENIRCRVY (72 aa). Positions 5 to 65 constitute a v-SNARE coiled-coil homology domain; it reads ELERCQRQAD…KTLAQQKRWE (61 aa). Serine 41, serine 48, and serine 49 each carry phosphoserine. A helical; Anchor for type IV membrane protein membrane pass occupies residues 73 to 93; sequence LGLAVAGGLLLILVVLLVIFL. Residues 94-102 are Vesicular-facing; the sequence is PSGEDSSKP.

It belongs to the synaptobrevin family.

Its subcellular location is the cell membrane. The protein localises to the endomembrane system. It localises to the golgi apparatus. It is found in the trans-Golgi network membrane. Functionally, may participate in trafficking events that are associated with myogenesis, such as myoblast fusion and/or GLUT4 trafficking. This chain is Vesicle-associated membrane protein 5 (Vamp5), found in Rattus norvegicus (Rat).